The following is a 147-amino-acid chain: Large ribosomal subunit protein uL13 (147 aa).

The interval 128 to 147 (PEHPHSAQQPVPYELKQVAQ) is disordered.

It belongs to the universal ribosomal protein uL13 family. As to quaternary structure, part of the 50S ribosomal subunit.

In terms of biological role, this protein is one of the early assembly proteins of the 50S ribosomal subunit, although it is not seen to bind rRNA by itself. It is important during the early stages of 50S assembly. The polypeptide is Large ribosomal subunit protein uL13 (Mycobacterium bovis (strain BCG / Pasteur 1173P2)).